The chain runs to 151 residues: Large ribosomal subunit protein bL9 (151 aa).

This sequence belongs to the bacterial ribosomal protein bL9 family.

In terms of biological role, binds to the 23S rRNA. This is Large ribosomal subunit protein bL9 from Carboxydothermus hydrogenoformans (strain ATCC BAA-161 / DSM 6008 / Z-2901).